Consider the following 310-residue polypeptide: Transcription initiation factor IIB (310 aa).

A run of 2 repeats spans residues arginine 126–leucine 209 and arginine 220–glutamine 301.

Belongs to the TFIIB family.

In terms of biological role, stabilizes TBP binding to an archaeal box-A promoter. Also responsible for recruiting RNA polymerase II to the pre-initiation complex (DNA-TBP-TFIIB). In Pyrodictium occultum, this protein is Transcription initiation factor IIB.